The sequence spans 159 residues: 3-hydroxyacyl-[acyl-carrier-protein] dehydratase FabZ (159 aa).

The active site involves His-58.

It belongs to the thioester dehydratase family. FabZ subfamily.

The protein localises to the cytoplasm. It carries out the reaction a (3R)-hydroxyacyl-[ACP] = a (2E)-enoyl-[ACP] + H2O. In terms of biological role, involved in unsaturated fatty acids biosynthesis. Catalyzes the dehydration of short chain beta-hydroxyacyl-ACPs and long chain saturated and unsaturated beta-hydroxyacyl-ACPs. This is 3-hydroxyacyl-[acyl-carrier-protein] dehydratase FabZ from Helicobacter pylori (strain ATCC 700392 / 26695) (Campylobacter pylori).